Here is a 379-residue protein sequence, read N- to C-terminus: Homoserine O-acetyltransferase (379 aa).

The tract at residues methionine 1–arginine 24 is disordered. The AB hydrolase-1 domain occupies asparagine 60–glutamate 365. Serine 165 serves as the catalytic Nucleophile. Arginine 236 serves as a coordination point for substrate. Residues aspartate 329 and histidine 359 contribute to the active site. Substrate is bound at residue aspartate 360.

It belongs to the AB hydrolase superfamily. MetX family. As to quaternary structure, homodimer.

Its subcellular location is the cytoplasm. The enzyme catalyses L-homoserine + acetyl-CoA = O-acetyl-L-homoserine + CoA. It functions in the pathway amino-acid biosynthesis; L-methionine biosynthesis via de novo pathway; O-acetyl-L-homoserine from L-homoserine: step 1/1. Transfers an acetyl group from acetyl-CoA to L-homoserine, forming acetyl-L-homoserine. The sequence is that of Homoserine O-acetyltransferase from Thermobifida fusca (strain YX).